A 216-amino-acid chain; its full sequence is Thiopurine S-methyltransferase (216 aa).

Positions 11, 46, 67, and 122 each coordinate S-adenosyl-L-methionine.

This sequence belongs to the class I-like SAM-binding methyltransferase superfamily. TPMT family.

Its subcellular location is the cytoplasm. The enzyme catalyses S-adenosyl-L-methionine + a thiopurine = S-adenosyl-L-homocysteine + a thiopurine S-methylether.. The protein is Thiopurine S-methyltransferase of Vibrio parahaemolyticus serotype O3:K6 (strain RIMD 2210633).